The chain runs to 285 residues: Transmembrane protein 53-B (285 aa).

Residues 165–185 form a helical membrane-spanning segment; sequence FLALAAFAIMVIILRIVLYPV.

Belongs to the TMEM53 family.

The protein localises to the nucleus outer membrane. Its function is as follows. Ensures normal bone formation, through the negative regulation of bone morphogenetic protein (BMP) signaling in osteoblast lineage cells by blocking cytoplasm-nucleus translocation of phosphorylated SMAD proteins. This Xenopus laevis (African clawed frog) protein is Transmembrane protein 53-B (tmem53-b).